Reading from the N-terminus, the 373-residue chain is MVAELTALRDQIDSVDKALLDLLAKRLELVAEVGEVKSRYGLPIYVPEREASMLASRRKEAEALGVPPDLIEDVLRRVMRESYTSENDKGFKTLCPELRPVVIVGGKGQMGRLFEKMLGLSGYTVKTLDKEDWPQAETLLSDAGMVIISVPIHLTEQVIAQLPPLPEDCILVDLASVKNRPLQAMLAAHNGPVLGLHPMFGPDSGSLAKQVVVWCDGRQPEAYQWFLEQIQVWGARLHRISAVEHDQNMAFIQALRHFATFAYGLHLAEENVNLDQLLALSSPIYRLELAMVGRLFAQDPQLYADIIMSSESNLALIKRYYQRFGEAIALLEQGDKQAFIASFNRVEQWFGDHAKRFLVESRSLLRSANDSRP.

The Chorismate mutase domain maps to 1–90 (MVAELTALRD…ESYTSENDKG (90 aa)). Positions 99 to 361 (RPVVIVGGKG…DHAKRFLVES (263 aa)) constitute a Prephenate/arogenate dehydrogenase domain.

It in the C-terminal section; belongs to the prephenate/arogenate dehydrogenase family.

It localises to the cytoplasm. The catalysed reaction is chorismate = prephenate. The enzyme catalyses prephenate + NAD(+) = 3-(4-hydroxyphenyl)pyruvate + CO2 + NADH. It functions in the pathway amino-acid biosynthesis; L-tyrosine biosynthesis; (4-hydroxyphenyl)pyruvate from prephenate (NAD(+) route): step 1/1. The protein operates within metabolic intermediate biosynthesis; prephenate biosynthesis; prephenate from chorismate: step 1/1. The sequence is that of T-protein (tyrA) from Enterobacter agglomerans (Erwinia herbicola).